We begin with the raw amino-acid sequence, 146 residues long: Hemoglobin subunit beta (146 aa).

Residues 2 to 146 enclose the Globin domain; it reads HWTAEEKQLI…VAHALARKYH (145 aa). The heme b site is built by histidine 63 and histidine 92.

This sequence belongs to the globin family. In terms of assembly, heterotetramer of two alpha chains and two beta chains. In terms of tissue distribution, red blood cells.

Functionally, involved in oxygen transport from the lung to the various peripheral tissues. The chain is Hemoglobin subunit beta (HBB) from Aegypius monachus (Cinereous vulture).